We begin with the raw amino-acid sequence, 471 residues long: Glutamyl-tRNA(Gln) amidotransferase subunit A, mitochondrial (471 aa).

Residues K64 and S141 each act as charge relay system in the active site. Residue S165 is the Acyl-ester intermediate of the active site.

It belongs to the amidase family. GatA subfamily. As to quaternary structure, subunit of the heterotrimeric GatCAB amidotransferase (AdT) complex, composed of A, B and C subunits.

The protein resides in the mitochondrion. The enzyme catalyses L-glutamyl-tRNA(Gln) + L-glutamine + ATP + H2O = L-glutaminyl-tRNA(Gln) + L-glutamate + ADP + phosphate + H(+). Allows the formation of correctly charged Gln-tRNA(Gln) through the transamidation of misacylated Glu-tRNA(Gln) in the mitochondria. The reaction takes place in the presence of glutamine and ATP through an activated gamma-phospho-Glu-tRNA(Gln). In Schizosaccharomyces pombe (strain 972 / ATCC 24843) (Fission yeast), this protein is Glutamyl-tRNA(Gln) amidotransferase subunit A, mitochondrial.